Consider the following 2458-residue polypeptide: Highly reducing polyketide synthase alnA (2458 aa).

One can recognise a Ketosynthase family 3 (KS3) domain in the interval 48 to 473 (TMPIAIVGMA…GANAHVILDD (426 aa)). Active-site for beta-ketoacyl synthase activity residues include C221, H356, and H396. Residues 488–515 (HTTLSESEDSSDSGLEMDSSTSDSGEGQ) form a disordered region. Low complexity predominate over residues 499 to 515 (DSGLEMDSSTSDSGEGQ). Residues 609-932 (VFTGQGAQWP…PYMSVLSRGK (324 aa)) form a malonyl-CoA:ACP transacylase (MAT) domain region. The active-site For malonyltransferase activity is the S697. The N-terminal hotdog fold stretch occupies residues 1000-1130 (NDLLGVPVAQ…GSFSLHYEDA (131 aa)). Positions 1000–1307 (NDLLGVPVAQ…VTEVSAGAST (308 aa)) constitute a PKS/mFAS DH domain. The dehydratase (DH) domain stretch occupies residues 1001–1305 (DLLGVPVAQQ…MTVTEVSAGA (305 aa)). The active-site Proton acceptor; for dehydratase activity is H1032. The segment at 1148-1307 (TRACRKLDVE…VTEVSAGAST (160 aa)) is C-terminal hotdog fold. Residue D1218 is the Proton donor; for dehydratase activity of the active site. An enoylreductase (ER) domain region spans residues 1740-2051 (GSPSQARWVP…GQQQHERVAA (312 aa)). The tract at residues 2076-2264 (KPDATYILAG…VTDASHFNEN (189 aa)) is ketoreductase (KR) domain. A Carrier domain is found at 2359-2441 (STTVAQAHEV…RLALKIVSKS (83 aa)). An O-(pantetheine 4'-phosphoryl)serine modification is found at S2401.

It participates in polyketide biosynthesis. In terms of biological role, highly reducing polyketide synthase; part of the gene cluster that mediates the biosynthesis of asperlin, a polyketide showing anti-inflammatory, antitumor and antibiotic activities. The first step of the asperlin biosynthesis is the production of the intermediate 2,4,6-octatrienoic acid by the highly redusing polyketide synthase alnA with cleavage of the PKS product by the esterase alnB. 2,4,6-octatrienoic acid is further converted to asperlin via several steps involving the remaining enzymes from the cluster. The polypeptide is Highly reducing polyketide synthase alnA (Emericella nidulans (strain FGSC A4 / ATCC 38163 / CBS 112.46 / NRRL 194 / M139) (Aspergillus nidulans)).